Reading from the N-terminus, the 115-residue chain is Large ribosomal subunit protein bL19 (115 aa).

It belongs to the bacterial ribosomal protein bL19 family.

This protein is located at the 30S-50S ribosomal subunit interface and may play a role in the structure and function of the aminoacyl-tRNA binding site. This chain is Large ribosomal subunit protein bL19, found in Hydrogenovibrio crunogenus (strain DSM 25203 / XCL-2) (Thiomicrospira crunogena).